The primary structure comprises 378 residues: AT-hook motif nuclear-localized protein 5 (378 aa).

Disordered regions lie at residues 30 to 70 (QVAS…AEHR), 88 to 160 (VQPT…GRKQ), and 302 to 378 (NNNK…LTRG). Basic residues predominate over residues 104–113 (VKKKRGRPRK). The short motif at 105 to 113 (KKKRGRPRK) is the Bipartite nuclear localization signal element. 2 consecutive DNA-binding regions (a.T hook) follow at residues 105 to 117 (KKKR…YVPD) and 147 to 159 (KRAR…TGRK). Residues 171–314 (TSAGLAFAPH…KTIKQEIKPK (144 aa)) form the PPC domain. Composition is skewed to polar residues over residues 316 to 327 (EPTNSEMETTPG) and 335 to 345 (STGQHTPQNFP).

In terms of assembly, interacts with AHL29.

It is found in the nucleus. Functionally, transcription factor that specifically binds AT-rich DNA sequences related to the nuclear matrix attachment regions (MARs). This is AT-hook motif nuclear-localized protein 5 from Arabidopsis thaliana (Mouse-ear cress).